A 452-amino-acid chain; its full sequence is 3-phosphoshikimate 1-carboxyvinyltransferase (452 aa).

A disordered region spans residues 1-23 (MLNGSASKPATARKSAGLTGSVR). Positions 28, 29, and 33 each coordinate 3-phosphoshikimate. Lysine 28 contacts phosphoenolpyruvate. Phosphoenolpyruvate contacts are provided by glycine 100 and arginine 128. Residues serine 173, glutamine 175, aspartate 326, and lysine 353 each contribute to the 3-phosphoshikimate site. Glutamine 175 serves as a coordination point for phosphoenolpyruvate. The active-site Proton acceptor is the aspartate 326. Arginine 357 and arginine 405 together coordinate phosphoenolpyruvate.

The protein belongs to the EPSP synthase family. As to quaternary structure, monomer.

Its subcellular location is the cytoplasm. It catalyses the reaction 3-phosphoshikimate + phosphoenolpyruvate = 5-O-(1-carboxyvinyl)-3-phosphoshikimate + phosphate. Its pathway is metabolic intermediate biosynthesis; chorismate biosynthesis; chorismate from D-erythrose 4-phosphate and phosphoenolpyruvate: step 6/7. In terms of biological role, catalyzes the transfer of the enolpyruvyl moiety of phosphoenolpyruvate (PEP) to the 5-hydroxyl of shikimate-3-phosphate (S3P) to produce enolpyruvyl shikimate-3-phosphate and inorganic phosphate. The protein is 3-phosphoshikimate 1-carboxyvinyltransferase of Rhizobium johnstonii (strain DSM 114642 / LMG 32736 / 3841) (Rhizobium leguminosarum bv. viciae).